Here is a 1220-residue protein sequence, read N- to C-terminus: MSMRFIVGRAGTGKSTLCRQEIHKESQEHPEGLPLILLVPEQATHQMEMSLAHDPQSGGILRAQVLSFRRLGWRVFSEVGGGGKAVIGEVGKRMLLRRLLLNHRSDLRVFARSATRPGMADLLAQAIAEFKIYRITPDQLRGIEDADELLLQKTHELAFLYEELNKSLGTAARDPDDELNLVAGKISQAPFLQGAKIWVDGFKGFTPQELYVIQAMLGTAAEITVSLPLDPELLKAGTPRFKPGEELFYEPRQTYQGLVDLAREAKASISHVFLTETHRFEKAGLKHLERFYNAYPTQTFPGGDDSTAPDPLGIALFPAANKRAEVEGVARELRRLAREEGRTWRDCSVVTRDLPGYQGIIEQVFNAHEIPYFLDHKRPVIHHPLLELLLSAIETVQKDWAYEPLFRCLKTDFFPCSKDRIDRLENYCLAYGIHGSAWKGNRSWSYYPDPNHKEETAGLNETRQIIYDLFSPFDQAIRPHPEAGGPSVTVAQITEAIYELLIRLKVPEHLQEWAEAAHSRGDLAEAQLQNQIWDAVIQVLDELVAGLGEEVMDLSDFAMILTSGLENLQLGLIPPGYDQVLVGSLDRSRNPETAVLFLLGANDGILPGKPSDEGVFDELERLRLESKGIMLAPKGKVQVYEEQYFIYTALTRAREQLYISYPLTDEEGRGLTVSPVIHRLKMIFPGLPEKYLSLDEEEPGALPHPYALLPAYALHLQKLRQGSSLSPLWQAIRLWFLSQTAAFPQVQLLEKGLRDQNEEGKLPQPLARQLYGKRLVTSVSRLELFARCPFAHFAQYGLKLKERSNYRLSPPDMGQFFHAVLHDYAIALRERGLDWGELSKEQSWQLVNETAEPIALQLQNKILLSNARYRYLTHKLKRTVHHAVRVLGEHARQGVFLPMELEVKFGPQEALPPLEVPLSGGNSLLLRGQIDRIDGAVLGHEIYLRIFDYKSREAHVSLNQIYHGLDLQLLAYLDAALQGAQILVSSSGLAEGSKGSEGSEGSEDSEDSTIHPAGFLYFPVLEPQLKSKTLLYPEQLEKDRIKAVKVKGYLLADRQVLLAMDRDLENSSLLGIKLTKSGEFKKGSPILTEEQFALLRKHLQHFLRCSGEALLEGDISITPYRQGKHTACQFCSYKPLCHFDPYLPENNYRNLPVIQDEEFWQRVQSQDSEQYPEQHPPTSVPGETSRRALQKDGGNSPRGQELIWLGEDEAGAGKEDDGHE.

The region spanning 1–281 (MSMRFIVGRA…VFLTETHRFE (281 aa)) is the UvrD-like helicase ATP-binding domain. 8–15 (GRAGTGKS) serves as a coordination point for ATP. In terms of domain architecture, UvrD-like helicase C-terminal spans 283–590 (AGLKHLERFY…LVGSLDRSRN (308 aa)). Residue C788 coordinates [4Fe-4S] cluster. The interval 989-1008 (LAEGSKGSEGSEGSEDSEDS) is disordered. Residues C1128, C1131, and C1137 each contribute to the [4Fe-4S] cluster site. Over residues 1162–1171 (RVQSQDSEQY) the composition is skewed to polar residues. Residues 1162 to 1220 (RVQSQDSEQYPEQHPPTSVPGETSRRALQKDGGNSPRGQELIWLGEDEAGAGKEDDGHE) are disordered. A compositionally biased stretch (basic and acidic residues) spans 1211–1220 (GAGKEDDGHE).

Belongs to the helicase family. AddB/RexB type 1 subfamily. Heterodimer of AddA and AddB. Mg(2+) serves as cofactor. It depends on [4Fe-4S] cluster as a cofactor.

In terms of biological role, the heterodimer acts as both an ATP-dependent DNA helicase and an ATP-dependent, dual-direction single-stranded exonuclease. Recognizes the chi site generating a DNA molecule suitable for the initiation of homologous recombination. The AddB subunit has 5' -&gt; 3' nuclease activity but not helicase activity. The protein is ATP-dependent helicase/deoxyribonuclease subunit B of Desulfitobacterium hafniense (strain Y51).